The sequence spans 172 residues: Adenine phosphoribosyltransferase (172 aa).

Belongs to the purine/pyrimidine phosphoribosyltransferase family. As to quaternary structure, homodimer.

The protein localises to the cytoplasm. It catalyses the reaction AMP + diphosphate = 5-phospho-alpha-D-ribose 1-diphosphate + adenine. It functions in the pathway purine metabolism; AMP biosynthesis via salvage pathway; AMP from adenine: step 1/1. In terms of biological role, catalyzes a salvage reaction resulting in the formation of AMP, that is energically less costly than de novo synthesis. The sequence is that of Adenine phosphoribosyltransferase from Streptococcus agalactiae serotype Ia (strain ATCC 27591 / A909 / CDC SS700).